Reading from the N-terminus, the 166-residue chain is Deglycase PfpI (166 aa).

The region spanning 1–166 is the PfpI endopeptidase domain; sequence MKILFLSANE…WMREFVKLLK (166 aa). Catalysis depends on Cys-100, which acts as the Nucleophile. His-101 is a catalytic residue.

This sequence belongs to the peptidase C56 family. Homooligomer. Exists in two functional species: the predominant form is a homohexamer that comprises about 90% of the total activity, and the minor form is trimeric.

Its subcellular location is the cytoplasm. The catalysed reaction is N(omega)-(1-hydroxy-2-oxopropyl)-L-arginyl-[protein] + H2O = lactate + L-arginyl-[protein] + H(+). It carries out the reaction N(6)-(1-hydroxy-2-oxopropyl)-L-lysyl-[protein] + H2O = lactate + L-lysyl-[protein] + H(+). It catalyses the reaction S-(1-hydroxy-2-oxopropyl)-L-cysteinyl-[protein] + H2O = lactate + L-cysteinyl-[protein] + H(+). The enzyme catalyses N(omega)-(1-hydroxy-2-oxoethyl)-L-arginyl-[protein] + H2O = L-arginyl-[protein] + glycolate + H(+). The catalysed reaction is N(6)-(1-hydroxy-2-oxoethyl)-L-lysyl-[protein] + H2O = glycolate + L-lysyl-[protein] + H(+). It carries out the reaction S-(1-hydroxy-2-oxoethyl)-L-cysteinyl-[protein] + H2O = glycolate + L-cysteinyl-[protein] + H(+). Deglycase that catalyzes the deglycation of the Maillard adducts formed between amino groups of proteins and reactive carbonyl groups of glyoxals. Thus, functions as a protein deglycase that repairs methylglyoxal- and glyoxal-glycated proteins, and releases repaired proteins and lactate or glycolate, respectively. Deglycates cysteine, arginine and lysine residues in proteins, and thus reactivates these proteins by reversing glycation by glyoxals. Thus, was shown to afford full protection against glycation of thioredoxin by glyoxal. Acts on early glycation intermediates (hemithioacetals and aminocarbinols), preventing the formation of advanced glycation endproducts (AGE) that cause irreversible damage. Prevents acrylamide formation in asparagine/glyoxal and asparagine/sugar mixtures, likely by degrading asparagine/glyoxal Maillard adducts formed at high temperatures. Also displays proteolytic activity. Cleaves at the carboxyl side of both basic and hydrophobic residues in the P1 position, indicating trypsin- and chymotrypsin-like specificities. The chain is Deglycase PfpI from Pyrococcus furiosus (strain ATCC 43587 / DSM 3638 / JCM 8422 / Vc1).